The sequence spans 357 residues: 3-dehydroquinate synthase (357 aa).

NAD(+) contacts are provided by residues 104–108, 128–129, Lys141, and 168–171; these read GVVGD, TT, and FLET. The Zn(2+) site is built by Glu183, His243, and His260.

This sequence belongs to the sugar phosphate cyclases superfamily. Dehydroquinate synthase family. NAD(+) serves as cofactor. Co(2+) is required as a cofactor. It depends on Zn(2+) as a cofactor.

The protein resides in the cytoplasm. The catalysed reaction is 7-phospho-2-dehydro-3-deoxy-D-arabino-heptonate = 3-dehydroquinate + phosphate. It functions in the pathway metabolic intermediate biosynthesis; chorismate biosynthesis; chorismate from D-erythrose 4-phosphate and phosphoenolpyruvate: step 2/7. Its function is as follows. Catalyzes the conversion of 3-deoxy-D-arabino-heptulosonate 7-phosphate (DAHP) to dehydroquinate (DHQ). The protein is 3-dehydroquinate synthase of Streptococcus pyogenes serotype M18 (strain MGAS8232).